The sequence spans 317 residues: Protein lifeguard 2 (317 aa).

The interval 1–54 is disordered; it reads MTQGKLSVANKAPGTEGQQHQANGEKKDAPAVPSAPPSYEEATSGEGLKAGTFP. 3 consecutive transmembrane segments (helical) span residues 107-127, 139-159, and 166-186; these read VYTI…LFTF, PGWY…LACC, and FPWN…LTGM. The N-linked (GlcNAc...) asparagine glycan is linked to Asn192. 4 consecutive transmembrane segments (helical) span residues 195–215, 226–246, 252–272, and 291–311; these read SVLL…IFSF, GVLF…AVLL, PWLH…FLAF, and IFGA…FLQL.

The protein belongs to the BI1 family. LFG subfamily. In terms of assembly, interacts with FAS/TNFRSF6 and BAX. Brain. Highly expressed in cerebellum, also found in cortex, olfactory bulb, and hippocampus.

Its subcellular location is the cell membrane. It localises to the membrane raft. The protein resides in the postsynaptic cell membrane. Its function is as follows. Antiapoptotic protein which protects cells uniquely from Fas-induced apoptosis. Regulates Fas-mediated apoptosis in neurons by interfering with caspase-8 activation. Plays a role in cerebellar development by affecting cerebellar size, internal granular layer (IGL) thickness, and Purkinje cell (PC) development. This chain is Protein lifeguard 2 (Faim2), found in Mus musculus (Mouse).